A 916-amino-acid chain; its full sequence is Pertactin autotransporter (916 aa).

The signal sequence occupies residues 1 to 37 (MNMSLSRIVKAAPLRRTTLAMALGALGALGAAPAAHA). A Cell attachment site; involved in adhesion to various eukaryotic cell lines motif is present at residues 263–265 (RGD). A run of 3 repeats spans residues 269 to 273 (GGAVP), 274 to 278 (GGAVP), and 279 to 283 (GGAVP). The segment at 269–288 (GGAVPGGAVPGGAVPGGFGP) is 4 X 5 AA tandem repeats of G-G-A-V-P. One copy of the 4; approximate repeat lies at 284 to 288 (GGFGP). Residues 564–613 (SLVGAKAPPAPKPAPQPGPQPGPQPPQPPQPPQRQPEAPAPQPPAGRELS) form a disordered region. The segment covering 571–607 (PPAPKPAPQPGPQPGPQPPQPPQPPQRQPEAPAPQPP) has biased composition (pro residues). The tract at residues 578 to 606 (PQPGPQPGPQPPQPPQPPQRQPEAPAPQP) is 6 X 3 AA repeats of P-Q-P. Positions 648 to 916 (LNPDAGGAWG…TFHAGYRYSW (269 aa)) constitute an Autotransporter domain. Positions 706-708 (RGD) match the Cell attachment site motif.

Monomer.

The protein resides in the periplasm. Its subcellular location is the secreted. The protein localises to the cell surface. It localises to the cell outer membrane. Agglutinogen that binds to eukaryotic cells; a process mediated by the R-G-D sequence. Pertactin may have a role in bacterial adhesion, and thus play a role in virulence. May contribute to the disease state of whooping cough. This is Pertactin autotransporter (prn) from Bordetella bronchiseptica (strain ATCC BAA-588 / NCTC 13252 / RB50) (Alcaligenes bronchisepticus).